The sequence spans 347 residues: uncharacterized protein (347 aa).

An N-terminal signal peptide occupies residues 1–21 (MNKKSLNIVVMFGILMILAFS).

This sequence belongs to the bacterial solute-binding protein 1 family. WtpA subfamily.

This is an uncharacterized protein from Methanococcus maripaludis (strain C5 / ATCC BAA-1333).